A 1112-amino-acid polypeptide reads, in one-letter code: DNA repair protein rad13 (1112 aa).

The interval 1 to 95 (MGVSGLWDIL…QTIQKRQARR (95 aa)) is N-domain. The Mg(2+) site is built by D30 and D77. The UIM domain maps to 395 to 414 (TDDLILQLATQQSLEENKKS). The segment at 742–870 (KRSEKRDADE…LALEILHEFP (129 aa)) is I-domain. The Mg(2+) site is built by E777, E779, D798, D800, and D849. The segment at 1056–1112 (KMMASKNSSDSDSDSEDNFLASLTPKTNSSSISIENLPRKTKLSTSLLKKPSKRRRK) is disordered. The segment covering 1079–1089 (TPKTNSSSISI) has biased composition (polar residues).

The protein belongs to the XPG/RAD2 endonuclease family. XPG subfamily. It depends on Mg(2+) as a cofactor.

The protein resides in the nucleus. Its function is as follows. Single-stranded DNA endonuclease involved in excision repair of DNA damaged with UV light, bulky adducts, or cross-linking agents. Essential for the incision step of excision-repair. The sequence is that of DNA repair protein rad13 (rad13) from Schizosaccharomyces pombe (strain 972 / ATCC 24843) (Fission yeast).